A 170-amino-acid chain; its full sequence is Ribosome maturation factor RimP (170 aa).

It belongs to the RimP family.

Its subcellular location is the cytoplasm. Its function is as follows. Required for maturation of 30S ribosomal subunits. The protein is Ribosome maturation factor RimP of Chlorobaculum parvum (strain DSM 263 / NCIMB 8327) (Chlorobium vibrioforme subsp. thiosulfatophilum).